Here is a 300-residue protein sequence, read N- to C-terminus: Actin-related protein 2/3 complex subunit 2 (300 aa).

2 positions are modified to N6-acetyllysine: Lys275 and Lys295.

Belongs to the ARPC2 family. Component of the Arp2/3 complex composed of ACTR2/ARP2, ACTR3/ARP3, ARPC1B/p41-ARC, ARPC2/p34-ARC, ARPC3/p21-ARC, ARPC4/p20-ARC and ARPC5/p16-ARC. Interacts with SHANK3; the interaction probably mediates the association of SHANK3 with the Arp2/3 complex.

The protein resides in the cytoplasm. The protein localises to the cytoskeleton. It is found in the cell projection. Its subcellular location is the synapse. It localises to the synaptosome. The protein resides in the nucleus. Actin-binding component of the Arp2/3 complex, a multiprotein complex that mediates actin polymerization upon stimulation by nucleation-promoting factor (NPF). The Arp2/3 complex mediates the formation of branched actin networks in the cytoplasm, providing the force for cell motility. Seems to contact the mother actin filament. In addition to its role in the cytoplasmic cytoskeleton, the Arp2/3 complex also promotes actin polymerization in the nucleus, thereby regulating gene transcription and repair of damaged DNA. The Arp2/3 complex promotes homologous recombination (HR) repair in response to DNA damage by promoting nuclear actin polymerization, leading to drive motility of double-strand breaks (DSBs). This chain is Actin-related protein 2/3 complex subunit 2, found in Rattus norvegicus (Rat).